We begin with the raw amino-acid sequence, 364 residues long: DNA polymerase IV (364 aa).

Residues 14-198 enclose the UmuC domain; that stretch reads IIHIDMDAFF…LPIEKFHGVG (185 aa). 2 residues coordinate Mg(2+): D18 and D116. E117 is an active-site residue.

The protein belongs to the DNA polymerase type-Y family. In terms of assembly, monomer. The cofactor is Mg(2+).

It is found in the cytoplasm. It catalyses the reaction DNA(n) + a 2'-deoxyribonucleoside 5'-triphosphate = DNA(n+1) + diphosphate. Its function is as follows. Poorly processive, error-prone DNA polymerase involved in untargeted mutagenesis. Copies undamaged DNA at stalled replication forks, which arise in vivo from mismatched or misaligned primer ends. These misaligned primers can be extended by PolIV. Exhibits no 3'-5' exonuclease (proofreading) activity. May be involved in translesional synthesis, in conjunction with the beta clamp from PolIII. The polypeptide is DNA polymerase IV (Streptococcus agalactiae serotype Ia (strain ATCC 27591 / A909 / CDC SS700)).